The chain runs to 540 residues: MAKDIKFSADARSAMVRGVDILADTVFVTLGPKGRNVVLEKAFGSPLITNDGVTIAKEIELEDHFENMGAKLVSEVASKTNDIAGDGTTTATVLPQAIVREGLKNVTAGANPIGIRRGIETAVSAAVEELKEIAQPVSGKEAIAQVAAVSSRSEKVGEYISEAMERVGNDGVITIEESRGMETELEVVEGMQFDRGYLSQYMVTDNEKMVSELENPYILITDKKISNIQEILPLLEEVLKTNRPLLIIADDVDGEALPTLVLNKIRGTFNVVAVKAPGFGDRRKAMLEDIAILTGGTVVTEDLGLDLKDATMQVLGQSAKVTVDKDSTVIVEGAGDSSAIANRVAIIKSQMEATTSDFDREKLQERLAKLAGGVAVIKVGAATETELKEMKLRIEDALNATRAAVEEGIVSGGGTALVNVIEKVAALKLNGDEETGRNIVLRALEEPVRQIAYNAGYKGSVIIARLKQSEIGTGFNAANGEWVDMVTTGIIDPVKVTRSALQNAASVASLILTTEAVVANKPEPEAPTAPAMDPSMMGGF.

Residues 29 to 32 (TLGP), 86 to 90 (DGTTT), Gly-413, 476 to 478 (NAA), and Asp-492 contribute to the ATP site.

This sequence belongs to the chaperonin (HSP60) family. In terms of assembly, forms a cylinder of 14 subunits composed of two heptameric rings stacked back-to-back. Interacts with the co-chaperonin GroES.

It is found in the cytoplasm. The enzyme catalyses ATP + H2O + a folded polypeptide = ADP + phosphate + an unfolded polypeptide.. Together with its co-chaperonin GroES, plays an essential role in assisting protein folding. The GroEL-GroES system forms a nano-cage that allows encapsulation of the non-native substrate proteins and provides a physical environment optimized to promote and accelerate protein folding. In Streptococcus agalactiae, this protein is Chaperonin GroEL.